Here is a 241-residue protein sequence, read N- to C-terminus: Beta-casein (241 aa).

The first 15 residues, 1–15, serve as a signal peptide directing secretion; that stretch reads MKILILACLVALALA. A disordered region spans residues 21-45; the sequence is LNVSSETVESLSSNEPDSSSEESIT. Ser24 carries the phosphoserine; in form 4-P, form 5-P, form 6-P and form 7-P modification. Position 25 is a phosphoserine; in form 7-P (Ser25). Thr27 bears the Phosphothreonine; in form 6-P and form 7-P mark. Phosphoserine occurs at positions 30 and 32. Phosphoserine; in form 5-P, form 6-P and form 7-P is present on Ser33. Ser38, Ser39, and Ser40 each carry phosphoserine; in form 4-P, form 5-P, form 6-P and form 7-P. Asn150 bears the Deamidated asparagine mark.

This sequence belongs to the beta-casein family. There are at least five different forms found in milk, with varying degrees of phosphorylation. These include form 3-P which is phosphorylated at three sites that have not been determined, this form is present in very low amounts, form 4-P which is phosphorylated at four sites, form 5-P which is phosphorylated at five sites, form 6-P which is phosphorylated at six sites, and form 7-P which is phosphorylated at seven sites. In terms of processing, spontaneous deamidation of Asn-150 produces aspartate or isoaspartate. As to expression, mammary gland specific. Secreted in milk.

The protein localises to the secreted. Important role in determination of the surface properties of the casein micelles. The chain is Beta-casein from Equus caballus (Horse).